Reading from the N-terminus, the 595-residue chain is Threonine dehydratase 2 biosynthetic, chloroplastic (595 aa).

A chloroplast-targeting transit peptide spans 1 to 51; that stretch reads MEFLCLAPTRSFSTNPKLTKSIPSDHTSTTSRIFTYQNMRGSTMRPLALPL. N6-(pyridoxal phosphate)lysine is present on lysine 143. 2 ACT-like domains span residues 420–492 and 514–585; these read ALLA…NLSH and IFGE…LDNY.

Belongs to the serine/threonine dehydratase family. In terms of assembly, homotetramer. Pyridoxal 5'-phosphate is required as a cofactor. Proteolytically cleaved by a chymotrypsin-like digestive protease in the midgut of the lepidopteran insects to remove the C-terminal regulatory domain, which allows efficient metabolizing of threonine in the presence of high isoleucine levels in the gut. Expressed in floral buds, 8-9 mm long flowers 1 to 2 days before anthesis, open flowers and floral organs including sepals, petals, stamens and carpels of 8-9 mm flowers (at protein level). Expressed in very early floral meristems of the anantha. Over 500-fold expression in mature flowers compared to leaves. Expressed in sepals, petals, stamens and carpels of the mature flower. In sepals, mostly expressed in the abaxial mesophyll cells and in petals in parenchymal cells. Not expressed in epidermal or vascular tissues of sepals and petals. In stamens, expressed in parenchymal cells of the connective and lobes, but not expressed in differentiated tissues such as tapetum (TP), stomium (SM), or pollen grains (PG). Not expressed in roots or seeds. High level of expression in immature flower buds, unopened flowers and opened flowers. Not expressed in unstressed leaves, root, stem or petiole.

The protein resides in the plastid. The protein localises to the chloroplast. It catalyses the reaction L-threonine = 2-oxobutanoate + NH4(+). It carries out the reaction L-serine = pyruvate + NH4(+). It participates in amino-acid biosynthesis; L-isoleucine biosynthesis; 2-oxobutanoate from L-threonine: step 1/1. With respect to regulation, threonine dehydratase 2 biosynthetic, chloroplastic: Strongly inhibited by 1 mM isoleucine. Processed threonine dehydratase 2: Not inhibited by isoleucine. Not required for normal growth and development of the plant. Its function is as follows. Involved in defense against lepidopteran, but not coleopteran herbivore insects. Acts in the insect gut to degrade threonine, which is an essential and limiting nutrient for the growth of lepidopteran larvae. Active against both L-threonine and L-serine. The polypeptide is Threonine dehydratase 2 biosynthetic, chloroplastic (Solanum lycopersicum (Tomato)).